Here is a 377-residue protein sequence, read N- to C-terminus: Endolytic peptidoglycan transglycosylase RlpA (377 aa).

Residues 1–19 (MHKQLPVICVAAGIVLLAA) form the signal peptide. A lipid anchor (N-palmitoyl cysteine) is attached at cysteine 20. Residue cysteine 20 is the site of S-diacylglycerol cysteine attachment. The tract at residues 196 to 277 (LPPRPDLSGG…PVSAPVTAPA (82 aa)) is disordered. Composition is skewed to low complexity over residues 208 to 218 (SASSAPAQPQG) and 264 to 277 (PQTA…TAPA). Residues 300–376 (AAASGRFVVQ…AQLQSFIASA (77 aa)) form the SPOR domain.

The protein belongs to the RlpA family.

It is found in the cell membrane. Its function is as follows. Lytic transglycosylase with a strong preference for naked glycan strands that lack stem peptides. The sequence is that of Endolytic peptidoglycan transglycosylase RlpA from Salmonella typhi.